Here is a 147-residue protein sequence, read N- to C-terminus: NADPH-dependent 7-cyano-7-deazaguanine reductase (147 aa).

The segment at 1-23 is disordered; it reads MQTTHLGKNSPIPQSPEEASLDY. Cys-46 (thioimide intermediate) is an active-site residue. The Proton donor role is filled by Asp-53. Substrate contacts are provided by residues 68 to 70 and 87 to 88; these read VES and HE.

Belongs to the GTP cyclohydrolase I family. QueF type 1 subfamily.

The protein localises to the cytoplasm. The catalysed reaction is 7-aminomethyl-7-carbaguanine + 2 NADP(+) = 7-cyano-7-deazaguanine + 2 NADPH + 3 H(+). It functions in the pathway tRNA modification; tRNA-queuosine biosynthesis. Its function is as follows. Catalyzes the NADPH-dependent reduction of 7-cyano-7-deazaguanine (preQ0) to 7-aminomethyl-7-deazaguanine (preQ1). The chain is NADPH-dependent 7-cyano-7-deazaguanine reductase from Zymomonas mobilis subsp. mobilis (strain ATCC 31821 / ZM4 / CP4).